The following is a 287-amino-acid chain: MTELVGVGLGLRREFMDAFLNAETHPDFIEVAPENWMGFGGRHAKLLARCVEKAPLICHGLSLSIGGPHPLDLEFIQQVKLFLQRYQVQIYSEHLSYTHDGGYLYDLLPIPMTEAAVNYVAERILRVQDILGQRLVIENVSTYLMPNAEMPEAEFVREVLLKADCELLLDVNNVYVNSVNHDSDAYAFIDAMPKDRIRYLHVAGHEQVEKNLLIDTHGAAIRDPVWQLLQYSYQVCGVKPTLLERDFNIPSWAQLQTELSQIKIMQQQGSRNEGKANILSHNATTVL.

This sequence belongs to the UPF0276 family.

The protein is UPF0276 protein ACIAD0933 of Acinetobacter baylyi (strain ATCC 33305 / BD413 / ADP1).